The chain runs to 290 residues: Glycine--tRNA ligase alpha subunit (290 aa).

It belongs to the class-II aminoacyl-tRNA synthetase family. Tetramer of two alpha and two beta subunits.

It is found in the cytoplasm. It carries out the reaction tRNA(Gly) + glycine + ATP = glycyl-tRNA(Gly) + AMP + diphosphate. The sequence is that of Glycine--tRNA ligase alpha subunit from Zymomonas mobilis subsp. mobilis (strain ATCC 31821 / ZM4 / CP4).